The sequence spans 182 residues: Peptidoglycan-recognition protein SB2 (182 aa).

Positions methionine 1 to glycine 17 are cleaved as a signal peptide. One can recognise an N-acetylmuramoyl-L-alanine amidase domain in the interval proline 40–glycine 165. Residue histidine 47 coordinates Zn(2+). The cysteines at positions 54 and 60 are disulfide-linked. A glycan (N-linked (GlcNAc...) asparagine) is linked at asparagine 149. Residues histidine 155 and cysteine 163 each contribute to the Zn(2+) site.

The protein belongs to the N-acetylmuramoyl-L-alanine amidase 2 family. Requires Zn(2+) as cofactor.

The protein resides in the secreted. The enzyme catalyses Hydrolyzes the link between N-acetylmuramoyl residues and L-amino acid residues in certain cell-wall glycopeptides.. Its function is as follows. N-acetylmuramyl-L-alanine amidase involved in innate immunity by degrading bacterial peptidoglycans (PGN). Probably plays a scavenger role by digesting biologically active PGN into biologically inactive fragments. Has no direct bacteriolytic activity. The sequence is that of Peptidoglycan-recognition protein SB2 (PGRP-SB2) from Drosophila simulans (Fruit fly).